The sequence spans 805 residues: Shutoff protein (805 aa).

A disordered region spans residues 1 to 88 (MESVEKEDSL…QVGRGDQRHG (88 aa)). Residues 18–29 (TTASTDAANAPT) are compositionally biased toward polar residues. 2 stretches are compositionally biased toward basic and acidic residues: residues 59–70 (RSVPTEDKKQDQ) and 79–88 (QVGRGDQRHG). The binding to host EIF4G stretch occupies residues 280–345 (VMSELIVRRA…AVLVTVELEC (66 aa)). The RRM domain occupies 348–466 (RFFADPEMQR…DLWTAFNERS (119 aa)). A phosphotyrosine; by host mark is found at Y365 and Y682. Residues 684–805 (DPQSGEELNP…AGTACSPTQP (122 aa)) form a disordered region. The span at 726-742 (GRGGILGQSGRGGFGRG) shows a compositional bias: gly residues. Over residues 754–763 (RSFRGRRGVR) the composition is skewed to basic residues.

The protein belongs to the adenoviridae shutoff protein family. Monomer. Interacts with hexon protein; this interaction allows chaperoning and trimerization of hexon proteins. Interacts (via N-terminus) with host initiation factor EIF4G (via C-terminus). Interacts (via RRM domain) with viral mRNAs that contain the tripartite leader; this interaction allows ribosome shunting and expression of viral late mRNAs. Post-translationally, might be cleaved by the viral protease. In terms of processing, phosphorylated. Tyrosine phosphorylation enhances preferential binding to tripartite leader mRNAs and allows ribosome shunting. Methylated. Asymmetric dimethylation by host PRMT1 of the Arg/Gly-rich region may regulate shutoff protein binding to hexon and promote the capsid assembly in the nucleus.

The protein resides in the host cytoplasm. Its function is as follows. Protein that inhibits host translation while promoting late viral translation by ribosome shunting. Blocks host cap-dependent translation by binding to eIF4G, displacing MKNK1 from cap initiation complexes and preventing EIF4E phosphorylation. Binds to the tripartite leader sequence of viral late mRNAs and recruits host eIF4G, PABPC1/poly-A binding protein and 40S ribosomes subunits on viral mRNAs, allowing ribosome shunting and efficient translation of late viral mRNAs even though conventional translation via ribosome scanning from the cap has been shut off in the host cell. During assembly, acts as a chaperone protein that helps hexon proteins assembly into trimers. The sequence is that of Shutoff protein from Homo sapiens (Human).